A 198-amino-acid chain; its full sequence is Large ribosomal subunit protein uL13B (198 aa).

Serine 2 bears the N-acetylserine; partial mark. Serine 43 carries the phosphoserine modification. Lysine 176 is covalently cross-linked (Glycyl lysine isopeptide (Lys-Gly) (interchain with G-Cter in ubiquitin)). 3 positions are modified to phosphoserine: serine 181, serine 185, and serine 187.

This sequence belongs to the universal ribosomal protein uL13 family. In terms of assembly, component of the large ribosomal subunit (LSU). Mature yeast ribosomes consist of a small (40S) and a large (60S) subunit. The 40S small subunit contains 1 molecule of ribosomal RNA (18S rRNA) and 33 different proteins (encoded by 57 genes). The large 60S subunit contains 3 rRNA molecules (25S, 5.8S and 5S rRNA) and 46 different proteins (encoded by 81 genes). N-terminally acetylated by acetyltransferase NatA.

It is found in the cytoplasm. Its function is as follows. Component of the ribosome, a large ribonucleoprotein complex responsible for the synthesis of proteins in the cell. The small ribosomal subunit (SSU) binds messenger RNAs (mRNAs) and translates the encoded message by selecting cognate aminoacyl-transfer RNA (tRNA) molecules. The large subunit (LSU) contains the ribosomal catalytic site termed the peptidyl transferase center (PTC), which catalyzes the formation of peptide bonds, thereby polymerizing the amino acids delivered by tRNAs into a polypeptide chain. The nascent polypeptides leave the ribosome through a tunnel in the LSU and interact with protein factors that function in enzymatic processing, targeting, and the membrane insertion of nascent chains at the exit of the ribosomal tunnel. In Saccharomyces cerevisiae (strain ATCC 204508 / S288c) (Baker's yeast), this protein is Large ribosomal subunit protein uL13B.